The following is a 260-amino-acid chain: Acyl-[acyl-carrier-protein]--UDP-N-acetylglucosamine O-acyltransferase (260 aa).

This sequence belongs to the transferase hexapeptide repeat family. LpxA subfamily. Homotrimer.

The protein resides in the cytoplasm. It carries out the reaction a (3R)-hydroxyacyl-[ACP] + UDP-N-acetyl-alpha-D-glucosamine = a UDP-3-O-[(3R)-3-hydroxyacyl]-N-acetyl-alpha-D-glucosamine + holo-[ACP]. It participates in glycolipid biosynthesis; lipid IV(A) biosynthesis; lipid IV(A) from (3R)-3-hydroxytetradecanoyl-[acyl-carrier-protein] and UDP-N-acetyl-alpha-D-glucosamine: step 1/6. Its function is as follows. Involved in the biosynthesis of lipid A, a phosphorylated glycolipid that anchors the lipopolysaccharide to the outer membrane of the cell. This Aliarcobacter butzleri (strain RM4018) (Arcobacter butzleri) protein is Acyl-[acyl-carrier-protein]--UDP-N-acetylglucosamine O-acyltransferase.